A 352-amino-acid polypeptide reads, in one-letter code: 4-hydroxy-3-methylbut-2-en-1-yl diphosphate synthase (flavodoxin) (352 aa).

[4Fe-4S] cluster is bound by residues Cys-263, Cys-266, Cys-298, and Glu-305.

This sequence belongs to the IspG family. [4Fe-4S] cluster is required as a cofactor.

It catalyses the reaction (2E)-4-hydroxy-3-methylbut-2-enyl diphosphate + oxidized [flavodoxin] + H2O + 2 H(+) = 2-C-methyl-D-erythritol 2,4-cyclic diphosphate + reduced [flavodoxin]. It participates in isoprenoid biosynthesis; isopentenyl diphosphate biosynthesis via DXP pathway; isopentenyl diphosphate from 1-deoxy-D-xylulose 5-phosphate: step 5/6. Functionally, converts 2C-methyl-D-erythritol 2,4-cyclodiphosphate (ME-2,4cPP) into 1-hydroxy-2-methyl-2-(E)-butenyl 4-diphosphate. This Sulfurimonas denitrificans (strain ATCC 33889 / DSM 1251) (Thiomicrospira denitrificans (strain ATCC 33889 / DSM 1251)) protein is 4-hydroxy-3-methylbut-2-en-1-yl diphosphate synthase (flavodoxin).